Consider the following 605-residue polypeptide: Glutamine--fructose-6-phosphate aminotransferase [isomerizing] (605 aa).

Cysteine 2 acts as the Nucleophile; for GATase activity in catalysis. Residues 2-219 enclose the Glutamine amidotransferase type-2 domain; the sequence is CGIVGVVGSK…DKELVVLTKD (218 aa). SIS domains are found at residues 285–424 and 457–595; these read IIKG…AEGE and VADL…VDKP. Lysine 600 functions as the For Fru-6P isomerization activity in the catalytic mechanism.

Homodimer.

It is found in the cytoplasm. The enzyme catalyses D-fructose 6-phosphate + L-glutamine = D-glucosamine 6-phosphate + L-glutamate. In terms of biological role, catalyzes the first step in hexosamine metabolism, converting fructose-6P into glucosamine-6P using glutamine as a nitrogen source. In Lactococcus lactis subsp. lactis (strain IL1403) (Streptococcus lactis), this protein is Glutamine--fructose-6-phosphate aminotransferase [isomerizing].